Reading from the N-terminus, the 496-residue chain is Solute carrier family 2, facilitated glucose transporter member 3 (496 aa).

At 1–11 (MADKKKITASL) the chain is on the cytoplasmic side. The helical transmembrane segment at 12–33 (IYAVSVAAIGSLQFGYNTGVIN) threads the bilayer. At 34–65 (APEKIIQAFYNRTLSQRSGETISPELLTSLWS) the chain is on the extracellular side. Asn44 is a glycosylation site (N-linked (GlcNAc...) asparagine). A helical transmembrane segment spans residues 66-86 (LSVAIFSVGGMIGSFSVSLFF). The Cytoplasmic portion of the chain corresponds to 87 to 91 (NRFGR). The chain crosses the membrane as a helical span at residues 92 to 112 (RNSMLLVNVLAFAGGALMALS). Over 113–119 (KIAKAVE) the chain is Extracellular. A helical transmembrane segment spans residues 120–143 (MLIIGRFIIGLFCGLCTGFVPMYI). The Cytoplasmic portion of the chain corresponds to 144 to 154 (SEVSPTSLRGA). Residues 155–175 (FGTLNQLGIVVGILVAQIFGL) traverse the membrane as a helical segment. Position 160 (Gln160) interacts with D-glucose. Topologically, residues 176–184 (EGIMGTEAL) are extracellular. A helical membrane pass occupies residues 185 to 205 (WPLLLGFTIVPAVLQCVALLF). Residues 206–270 (CPESPRFLLI…LFRSPNYRQP (65 aa)) lie on the Cytoplasmic side of the membrane. A helical membrane pass occupies residues 271 to 291 (IIISITLQLSQQLSGINAVFY). The tract at residues 278–280 (QLS) is important for selectivity against fructose. D-glucose is bound by residues 281–282 (QQ) and Asn287. At 292–305 (YSTGIFERAGITQP) the chain is on the extracellular side. The helical transmembrane segment at 306-326 (VYATIGAGVVNTVFTVVSLFL) threads the bilayer. Asn316 contacts D-glucose. The Cytoplasmic segment spans residues 327 to 332 (VERAGR). Residues 333 to 353 (RTLHLVGLGGMAVCAAVMTIA) form a helical membrane-spanning segment. The Extracellular segment spans residues 354-362 (LALKEKWIR). The chain crosses the membrane as a helical span at residues 363–388 (YISIVATFGFVALFEIGPGPIPWFIV). Residues Glu377 and Trp385 each contribute to the D-glucose site. Topologically, residues 389 to 398 (AELFSQGPRP) are cytoplasmic. Residues 399 to 419 (AAMAVAGCSNWTSNFLVGMLF) form a helical membrane-spanning segment. At 420 to 428 (PYAEKLCGP) the chain is on the extracellular side. Residues 429-449 (YVFLIFLVFLLIFFIFTYFKV) form a helical membrane-spanning segment. Residues 450–496 (PETKGRTFEDISRGFEEQVETSSPSSPPIEKNPMVEMNSIEPDKEVA) are Cytoplasmic-facing. The interval 464-496 (FEEQVETSSPSSPPIEKNPMVEMNSIEPDKEVA) is disordered.

It belongs to the major facilitator superfamily. Sugar transporter (TC 2.A.1.1) family. Glucose transporter subfamily.

It is found in the cell membrane. It localises to the perikaryon. The protein localises to the cell projection. It catalyses the reaction D-glucose(out) = D-glucose(in). It carries out the reaction D-galactose(in) = D-galactose(out). Deoxyglucose transport is inhibited by D-glucose, D-galactose and maltose. Galactose transport is inhibited by D-glucose and maltose. Its function is as follows. Facilitative glucose transporter. Can also mediate the uptake of various other monosaccharides across the cell membrane. Mediates the uptake of glucose, 2-deoxyglucose, galactose, mannose, xylose and fucose, and probably also dehydroascorbate. Does not mediate fructose transport. Required for mesendoderm differentiation. This chain is Solute carrier family 2, facilitated glucose transporter member 3, found in Gallus gallus (Chicken).